The chain runs to 550 residues: Cytochrome P450 monooxygenase hasH (550 aa).

A helical transmembrane segment spans residues 39–59; it reads IGVLASIVVLVTVVIGPKAVI. Cys-493 is a heme binding site.

This sequence belongs to the cytochrome P450 family. Heme is required as a cofactor.

The protein resides in the membrane. The protein operates within secondary metabolite biosynthesis. Functionally, cytochrome P450 monooxygenase; part of the gene cluster that mediates the biosynthesis of hexadehydro-astechrome (HAS), a tryptophan-derived iron(III)-complex that acts as a virulence factor in infected mice. Within the pathway, hasH, with the O-methyltransferase hasC and the FAD-linked oxidoreductase hasG, convert the hasE-prenylated Trp-Ala dipeptide into an O-methylated diketopiperazine that is then released from the hasD NRPS. The HAS biosynthesis begins with the synthesis of a tethered Trp-Ala dipeptide by the NRPS hasD. The 7-dimethylallyltryptophan synthase hasE then catalyzes the prenylation of the hasD-tethered tryptophan or the resulting tethered Trp-Ala dipeptide at the C-7 position of the indole moiety. HAS biosynthesis continues via tethered intermediates with the succesive action of the cytochrome P450 monooxygenase hasH, the O-methyltransferase hasC, and the FAD-linked oxidoreductase hasG. The resulting O-methylated diketopiperazine is then released from hasD. Finally, three O-methylated diketopiperazine molecules assemble in a trimeric complex with Fe(III) to produce hexadehydro-astechrome. The sequence is that of Cytochrome P450 monooxygenase hasH from Aspergillus fumigatus (strain CBS 144.89 / FGSC A1163 / CEA10) (Neosartorya fumigata).